A 406-amino-acid chain; its full sequence is telomere-associated protein 1 (406 aa).

The span at 20–40 (EHHNGSHDNDDKDKEDKEKQN) shows a compositional bias: basic and acidic residues. The tract at residues 20–46 (EHHNGSHDNDDKDKEDKEKQNTEAVAA) is disordered. The HTH myb-type domain maps to 147 to 206 (TTRRVRLRWTQEETADLMEGCKVHGVGNWKKILTDPRFRFNNRTAVDLKDRFRTCFPEDY). The H-T-H motif DNA-binding region spans 175–202 (WKKILTDPRFRFNNRTAVDLKDRFRTCF). One can recognise a Myb-like domain in the interval 234 to 288 (VNRKERRVFTPEEDERLLNGFMKHGPSWSNIQRDNELGLFERRSTDLRDRFRNAF). A disordered region spans residues 368–389 (TQELQPQAHSRKQQGGDGLKEE).

The protein localises to the nucleus. It is found in the chromosome. Its subcellular location is the telomere. In terms of biological role, telomere-binding protein that mediates telomere clustering by promoting formation of head-to-head dimers of DNA molecules through the telomeric tracts. Binds specifically 5'-TTAGTCAGGG-3' repeats in subtelomeric regions. This Yarrowia lipolytica (strain CLIB 122 / E 150) (Yeast) protein is telomere-associated protein 1.